The sequence spans 541 residues: Chaperonin GroEL 5 (541 aa).

Residues 30 to 33 (TLGP), G415, and D496 each bind ATP.

It belongs to the chaperonin (HSP60) family. Forms a cylinder of 14 subunits composed of two heptameric rings stacked back-to-back. Interacts with the co-chaperonin GroES.

Its subcellular location is the cytoplasm. The enzyme catalyses ATP + H2O + a folded polypeptide = ADP + phosphate + an unfolded polypeptide.. Functionally, together with its co-chaperonin GroES, plays an essential role in assisting protein folding. The GroEL-GroES system forms a nano-cage that allows encapsulation of the non-native substrate proteins and provides a physical environment optimized to promote and accelerate protein folding. In Bradyrhizobium diazoefficiens (strain JCM 10833 / BCRC 13528 / IAM 13628 / NBRC 14792 / USDA 110), this protein is Chaperonin GroEL 5.